The sequence spans 92 residues: Protein AC152 (92 aa).

Functionally, acts as a transactivator of AC102 and HE65 genes. Therefore, participates in the global recruitment of G-actin to the host nucleus. This Autographa californica nuclear polyhedrosis virus (AcMNPV) protein is Protein AC152 (AC152).